The following is a 154-amino-acid chain: Plastocyanin, chloroplastic (154 aa).

A chloroplast-targeting transit peptide spans 1–57 (MAALSSAAVTIPSMAPSAPGRRRMRSSLVVRASLGKAAGAAAVAVAASAMLAGGAMA). Residues 58–154 (QEVLLGANGG…AGMVGKVTVN (97 aa)) form the Plastocyanin-like domain. Positions 94, 139, 142, and 147 each coordinate Cu cation.

This sequence belongs to the plastocyanin family. Requires Cu(2+) as cofactor.

The protein resides in the plastid. It is found in the chloroplast thylakoid membrane. In terms of biological role, participates in electron transfer between P700 and the cytochrome b6-f complex in photosystem I. This Oryza sativa subsp. indica (Rice) protein is Plastocyanin, chloroplastic (PETE).